A 224-amino-acid polypeptide reads, in one-letter code: UPF0758 protein Tbd_2588 (224 aa).

Residues 102 to 224 (ALSSPAAVRD…ALSFAEAGHL (123 aa)) enclose the MPN domain. The Zn(2+) site is built by histidine 173, histidine 175, and aspartate 186. The short motif at 173–186 (HNHPSGVNEPSQAD) is the JAMM motif element.

Belongs to the UPF0758 family.

The polypeptide is UPF0758 protein Tbd_2588 (Thiobacillus denitrificans (strain ATCC 25259 / T1)).